The sequence spans 148 residues: Hydrogenase expression/formation protein HoxO (148 aa).

The disordered stretch occupies residues 128–148 (IPVLSPESGTPSCSPMETSES). Residues 134 to 148 (ESGTPSCSPMETSES) are compositionally biased toward polar residues.

Belongs to the HupG/HyaE family.

The chain is Hydrogenase expression/formation protein HoxO (hoxO) from Azotobacter vinelandii.